The following is a 330-amino-acid chain: DNA-directed RNA polymerase subunit alpha (330 aa).

The segment at 1 to 236 is alpha N-terminal domain (alpha-NTD); the sequence is MQGSVTEFLK…EQLDAFVDLR (236 aa). Positions 250–330 are alpha C-terminal domain (alpha-CTD); it reads FDPILLRPVD…NWPPASIAED (81 aa).

The protein belongs to the RNA polymerase alpha chain family. Homodimer. The RNAP catalytic core consists of 2 alpha, 1 beta, 1 beta' and 1 omega subunit. When a sigma factor is associated with the core the holoenzyme is formed, which can initiate transcription.

The catalysed reaction is RNA(n) + a ribonucleoside 5'-triphosphate = RNA(n+1) + diphosphate. Its function is as follows. DNA-dependent RNA polymerase catalyzes the transcription of DNA into RNA using the four ribonucleoside triphosphates as substrates. This Vibrio atlanticus (strain LGP32) (Vibrio splendidus (strain Mel32)) protein is DNA-directed RNA polymerase subunit alpha.